Reading from the N-terminus, the 325-residue chain is MIDYTSFLEQEKEGPLARWVEILPDQISEGLSTKRYGDLEQWLTAMQNLPQVDNVQVSYQSAVTLKSTAPLAQETHTLIEQQFRALIPWRKGPYNIFDIEIDTEWHSDWKWDRVLPHLAPLKHRKILDVGCGNGYHCWRMYGEGASQVIGIDPSPRFVVQFYMLKHFIGSNAPVDLLPVPMEAVPANLQAFDTTFSMGVLYHRRSPMDHLRELKATLRPGGQLVLETLVIEGKLGEVLVPEGRYAMMNNVWFLPSVPTLISWLTKCGFKNARCVDVNQTSTDEQRSTEWMTFQSLSDFLDPNDPTLTAEGHPAPLRAVILAEAPE.

Residues Lys91, Trp105, Lys110, Gly130, 152 to 154, 181 to 182, Met197, Tyr201, and Arg316 contribute to the carboxy-S-adenosyl-L-methionine site; these read DPS and ME.

This sequence belongs to the class I-like SAM-binding methyltransferase superfamily. CmoB family. Homotetramer.

It catalyses the reaction carboxy-S-adenosyl-L-methionine + 5-hydroxyuridine(34) in tRNA = 5-carboxymethoxyuridine(34) in tRNA + S-adenosyl-L-homocysteine + H(+). In terms of biological role, catalyzes carboxymethyl transfer from carboxy-S-adenosyl-L-methionine (Cx-SAM) to 5-hydroxyuridine (ho5U) to form 5-carboxymethoxyuridine (cmo5U) at position 34 in tRNAs. This is tRNA U34 carboxymethyltransferase from Saccharophagus degradans (strain 2-40 / ATCC 43961 / DSM 17024).